We begin with the raw amino-acid sequence, 564 residues long: 3beta-hydroxysteroid-dehydrogenase/decarboxylase isoform 2 (564 aa).

Residue 16-21 coordinates NAD(+); it reads GGRGFA. N-linked (GlcNAc...) asparagine glycans are attached at residues asparagine 146 and asparagine 158. NAD(+) contacts are provided by tyrosine 161 and lysine 165. Lysine 165 functions as the Proton donor in the catalytic mechanism. The Reticulon domain maps to 384 to 564; that stretch reads VADTLLWKDL…EKLFGSKKHD (181 aa). The next 2 helical transmembrane spans lie at 398 to 418 and 424 to 444; these read IAIF…STVV and ALLV…KIFG. An N-linked (GlcNAc...) asparagine glycan is attached at asparagine 474. The next 2 helical transmembrane spans lie at 486–506 and 507–527; these read GNDW…SLAG and AISL…AFLV.

This sequence belongs to the 3-beta-HSD family.

It localises to the endoplasmic reticulum membrane. The enzyme catalyses a 3beta-hydroxysteroid-4alpha-carboxylate + NAD(+) = a 3-oxosteroid + CO2 + NADH. The catalysed reaction is 4alpha-carboxy-4beta,14alpha-dimethyl-9beta,19-cyclo-5alpha-ergost-24(24(1))-en-3beta-ol + NAD(+) = cycloeucalenone + CO2 + NADH. The protein operates within steroid biosynthesis; zymosterol biosynthesis; zymosterol from lanosterol: step 4/6. Functionally, 3beta-hydroxysteroid-dehydrogenase/decarboxylase involved in sterol synthesis. Catalyzes the formation of 3-oxosteroids from 3beta-hydroxysteroids-4alpha-carboxylate. Involved in the regulation of inflorescence internodes and leaves growth, probably by affecting auxin transporter activity possibly by altering sterol composition in the membranes. The protein is 3beta-hydroxysteroid-dehydrogenase/decarboxylase isoform 2 of Arabidopsis thaliana (Mouse-ear cress).